Consider the following 118-residue polypeptide: Large ribosomal subunit protein bL20 (118 aa).

Belongs to the bacterial ribosomal protein bL20 family.

Functionally, binds directly to 23S ribosomal RNA and is necessary for the in vitro assembly process of the 50S ribosomal subunit. It is not involved in the protein synthesizing functions of that subunit. The sequence is that of Large ribosomal subunit protein bL20 from Marinomonas sp. (strain MWYL1).